We begin with the raw amino-acid sequence, 292 residues long: Nucleotide-binding protein Ldb0621 (292 aa).

ATP is bound at residue 14-21 (GMSGAGKT). 64–67 (DLRV) contributes to the GTP binding site.

The protein belongs to the RapZ-like family.

Its function is as follows. Displays ATPase and GTPase activities. The polypeptide is Nucleotide-binding protein Ldb0621 (Lactobacillus delbrueckii subsp. bulgaricus (strain ATCC 11842 / DSM 20081 / BCRC 10696 / JCM 1002 / NBRC 13953 / NCIMB 11778 / NCTC 12712 / WDCM 00102 / Lb 14)).